The sequence spans 515 residues: Protein aaim-1 (515 aa).

Positions 1–16 (MRLLFFFSILYTASLC) are cleaved as a signal peptide. Residues Asn46 and Asn127 are each glycosylated (N-linked (GlcNAc...) asparagine). Residues 248-267 (RRTDPNSKFKPRPTTSQSNG) form a disordered region. Residue Asn447 is glycosylated (N-linked (GlcNAc...) asparagine).

As to expression, expressed in the terminal bulb of the pharynx and the posterior of the intestine (at protein level). Expressed by intestinal cells and secreted into the intestinal lumen (at protein level).

It is found in the secreted. Functionally, plays a role in promoting resistance to bacterial pathogens such as P.aeruginosa by inhibiting bacterial intestinal colonization. Its function is as follows. (Microbial infection) Promotes infection by microsporidian pathogens such as N.parisii in the early larval stages of development. Involved in ensuring the proper orientation and location of the spore proteins of N.parisii during intestinal cell invasion. The protein is Protein aaim-1 of Caenorhabditis elegans.